Consider the following 204-residue polypeptide: Somatotropin (204 aa).

An N-terminal signal peptide occupies residues 1 to 17 (MDRVLLLLSVLTLGVSS). Gln-18 carries the pyrrolidone carboxylic acid modification. His-36 contacts Zn(2+). A disulfide bridge connects residues Cys-69 and Cys-177. Glu-186 is a binding site for Zn(2+). Cys-194 and Cys-202 are joined by a disulfide.

Belongs to the somatotropin/prolactin family.

Its subcellular location is the secreted. Growth hormone plays an important role in growth control and is involved in the regulation of several anabolic processes. Implicated as an osmoregulatory substance important for seawater adaptation. The sequence is that of Somatotropin (gh) from Larimichthys crocea (Large yellow croaker).